Here is a 159-residue protein sequence, read N- to C-terminus: Keratin-associated protein 6-2 (159 aa).

The interval 11–147 is 66 X 2 AA repeats of G-[YCGS]; that stretch reads GYGCGYGSGY…SYYRSGCCGY (137 aa).

The protein belongs to the KRTAP type 6 family. In terms of assembly, interacts with hair keratins. Expressed in skin during two hair growth cycles. Expression restricted to the cortical cells of hair follicles, appearing first in the cortical cells processing the flat nuclei located a few cells above the dermal papilla.

In terms of biological role, in the hair cortex, hair keratin intermediate filaments are embedded in an interfilamentous matrix, consisting of hair keratin-associated proteins (KRTAP), which are essential for the formation of a rigid and resistant hair shaft through their extensive disulfide bond cross-linking with abundant cysteine residues of hair keratins. The matrix proteins include the high-sulfur and high-glycine-tyrosine keratins. The chain is Keratin-associated protein 6-2 from Mus musculus (Mouse).